Here is a 948-residue protein sequence, read N- to C-terminus: Protein translocase subunit SecA (948 aa).

Residues Gln91, 109–113 (GEGKT), and Asp509 each bind ATP.

It belongs to the SecA family. As to quaternary structure, monomer and homodimer. Part of the essential Sec protein translocation apparatus which comprises SecA, SecYEG and auxiliary proteins SecDF. Other proteins may also be involved.

The protein localises to the cell inner membrane. It is found in the cellular thylakoid membrane. It localises to the cytoplasm. It carries out the reaction ATP + H2O + cellular proteinSide 1 = ADP + phosphate + cellular proteinSide 2.. In terms of biological role, part of the Sec protein translocase complex. Interacts with the SecYEG preprotein conducting channel. Has a central role in coupling the hydrolysis of ATP to the transfer of proteins into and across the cell membrane, serving as an ATP-driven molecular motor driving the stepwise translocation of polypeptide chains across the membrane. Functionally, probably participates in protein translocation into and across both the cytoplasmic and thylakoid membranes in cyanobacterial cells. This chain is Protein translocase subunit SecA, found in Synechococcus elongatus (strain ATCC 33912 / PCC 7942 / FACHB-805) (Anacystis nidulans R2).